The chain runs to 209 residues: Putative tripartite motif-containing protein 61 (209 aa).

Residues 16–57 form an RING-type zinc finger; it reads CPICLDYLKDPVTISCGHNFCLSCIIMSWKDLHDSFPCPFCH. Residues 92-133 form a B box-type zinc finger; the sequence is EEKHVCKKHNQVLTFFCQKDLELLCPRCSLSTDHQHHCVWPI. The Zn(2+) site is built by cysteine 97, histidine 100, cysteine 119, and histidine 125.

The sequence is that of Putative tripartite motif-containing protein 61 (TRIM61) from Homo sapiens (Human).